Here is a 1487-residue protein sequence, read N- to C-terminus: Major viral transcription factor (1487 aa).

Disordered regions lie at residues 41–295 (AAPD…LPPG), 310–371 (LAKT…EEAP), 409–442 (REPL…SRDG), and 803–1007 (PPTR…HTPR). A compositionally biased stretch (pro residues) spans 66-75 (VIPPPSPAPE). 2 stretches are compositionally biased toward low complexity: residues 165–193 (PSSA…SSSS) and 201–213 (DGAG…SSSS). Residues 214-224 (DDSDSDEGGEE) show a composition bias toward acidic residues. A compositionally biased stretch (low complexity) spans 235-272 (AAKTPSAAGSPGPSSGGDRPAAGAATPKSCRSGAASPG). Over residues 273 to 285 (APAPAPASAPAPS) the composition is skewed to pro residues. 3 stretches are compositionally biased toward low complexity: residues 807 to 829 (SQQP…AEGS), 849 to 860 (PSSHSQSPQHSQ), and 867 to 877 (ATTATCCRATQ). The span at 878-893 (TNARSRGQQHQPQKAR) shows a compositional bias: polar residues. The span at 920 to 929 (HGRPRGKSGK) shows a compositional bias: basic residues. Positions 938–951 (AAQAGASASFSSSA) are enriched in low complexity. The segment covering 988–1007 (GPDRRGGFRRVPRGDCHTPR) has biased composition (basic and acidic residues).

The protein belongs to the herpesviridae ICP4 family. In terms of processing, a long stretch of serine residues may be a major site of phosphorylation.

It localises to the host nucleus. In terms of biological role, this IE protein is a multifunctional protein capable of migrating to the nucleus, binding to DNA, trans-activating other viral genes, and autoregulating its own synthesis. This Equine herpesvirus 1 (strain Kentucky A) (EHV-1) protein is Major viral transcription factor (IE).